A 213-amino-acid chain; its full sequence is Peptidyl-prolyl cis-trans isomerase B (213 aa).

Residues Met1 to Ser23 form the signal peptide. One can recognise a PPIase cyclophilin-type domain in the interval Phe35 to His197. Residues Asp210 to Glu213 carry the Prevents secretion from ER motif.

This sequence belongs to the cyclophilin-type PPIase family. PPIase B subfamily.

It localises to the endoplasmic reticulum lumen. The enzyme catalyses [protein]-peptidylproline (omega=180) = [protein]-peptidylproline (omega=0). With respect to regulation, inhibited by cyclosporin A (CsA). PPIases accelerate the folding of proteins. It catalyzes the cis-trans isomerization of proline imidic peptide bonds in oligopeptides. The sequence is that of Peptidyl-prolyl cis-trans isomerase B from Schistosoma japonicum (Blood fluke).